The chain runs to 23 residues: SELTVEDVEPLNNADKNKVVIXI.

Its function is as follows. Stimulates synthesis of ecdysteroid in the testes of larvae and pupae. This Lymantria dispar (Gypsy moth) protein is Testis ecdysiotropin peptide B.